Reading from the N-terminus, the 146-residue chain is Hemoglobin subunit beta (146 aa).

Residues 2-146 (QWTAEEKQLI…VAHALARKYH (145 aa)) form the Globin domain. His63 and His92 together coordinate heme b.

The protein belongs to the globin family. As to quaternary structure, heterotetramer of two alpha chains and two beta chains. Red blood cells.

In terms of biological role, involved in oxygen transport from the lung to the various peripheral tissues. In Rhea americana (Greater rhea), this protein is Hemoglobin subunit beta (HBB).